Here is a 449-residue protein sequence, read N- to C-terminus: Tubulin alpha-8 chain (449 aa).

The short motif at 1–4 (MREC) is the MREC motif element. 8 residues coordinate GTP: Q11, E71, S140, G144, T145, T179, N206, and N228. E71 contributes to the Mg(2+) binding site. E254 is an active-site residue.

This sequence belongs to the tubulin family. In terms of assembly, dimer of alpha and beta chains. A typical microtubule is a hollow water-filled tube with an outer diameter of 25 nm and an inner diameter of 15 nM. Alpha-beta heterodimers associate head-to-tail to form protofilaments running lengthwise along the microtubule wall with the beta-tubulin subunit facing the microtubule plus end conferring a structural polarity. Microtubules usually have 13 protofilaments but different protofilament numbers can be found in some organisms and specialized cells. Requires Mg(2+) as cofactor. Some glutamate residues at the C-terminus are polyglycylated, resulting in polyglycine chains on the gamma-carboxyl group. Glycylation is mainly limited to tubulin incorporated into axonemes (cilia and flagella) whereas glutamylation is prevalent in neuronal cells, centrioles, axonemes, and the mitotic spindle. Both modifications can coexist on the same protein on adjacent residues, and lowering polyglycylation levels increases polyglutamylation, and reciprocally. Cilia and flagella glycylation is required for their stability and maintenance. Flagella glycylation controls sperm motility. Post-translationally, some glutamate residues at the C-terminus are polyglutamylated, resulting in polyglutamate chains on the gamma-carboxyl group. Polyglutamylation plays a key role in microtubule severing by spastin (SPAST). SPAST preferentially recognizes and acts on microtubules decorated with short polyglutamate tails: severing activity by SPAST increases as the number of glutamates per tubulin rises from one to eight, but decreases beyond this glutamylation threshold. Glutamylation is also involved in cilia motility. In terms of processing, the C-terminal phenylalanine residue is cleaved by MATCAP1/KIAA0895L.

The protein resides in the cytoplasm. The protein localises to the cytoskeleton. It carries out the reaction GTP + H2O = GDP + phosphate + H(+). In terms of biological role, tubulin is the major constituent of microtubules, a cylinder consisting of laterally associated linear protofilaments composed of alpha- and beta-tubulin heterodimers. Microtubules grow by the addition of GTP-tubulin dimers to the microtubule end, where a stabilizing cap forms. Below the cap, tubulin dimers are in GDP-bound state, owing to GTPase activity of alpha-tubulin. The chain is Tubulin alpha-8 chain (TUBA8) from Bos taurus (Bovine).